We begin with the raw amino-acid sequence, 341 residues long: tRNA N6-adenosine threonylcarbamoyltransferase (341 aa).

Fe cation contacts are provided by histidine 119 and histidine 123. Residues 141–145 (MVSGG), aspartate 174, glycine 187, and asparagine 279 contribute to the substrate site. Aspartate 307 provides a ligand contact to Fe cation.

The protein belongs to the KAE1 / TsaD family. The cofactor is Fe(2+).

The protein resides in the cytoplasm. The enzyme catalyses L-threonylcarbamoyladenylate + adenosine(37) in tRNA = N(6)-L-threonylcarbamoyladenosine(37) in tRNA + AMP + H(+). Required for the formation of a threonylcarbamoyl group on adenosine at position 37 (t(6)A37) in tRNAs that read codons beginning with adenine. Is involved in the transfer of the threonylcarbamoyl moiety of threonylcarbamoyl-AMP (TC-AMP) to the N6 group of A37, together with TsaE and TsaB. TsaD likely plays a direct catalytic role in this reaction. The protein is tRNA N6-adenosine threonylcarbamoyltransferase of Oenococcus oeni (strain ATCC BAA-331 / PSU-1).